We begin with the raw amino-acid sequence, 1479 residues long: WASH complex subunit 2 (1479 aa).

A compositionally biased stretch (low complexity) spans methionine 1–proline 17. 5 disordered regions span residues methionine 1–tryptophan 25, glycine 188–lysine 210, phenylalanine 240–lysine 564, phenylalanine 576–isoleucine 1383, and threonine 1419–aspartate 1479. Residues glutamate 242–aspartate 279 show a composition bias toward acidic residues. Residues serine 334–leucine 349 show a composition bias toward low complexity. Positions aspartate 422–glutamate 431 are enriched in acidic residues. Composition is skewed to low complexity over residues threonine 465 to lysine 475 and threonine 514 to lysine 532. The residue at position 535 (threonine 535) is a Phosphothreonine. A compositionally biased stretch (polar residues) spans alanine 542 to serine 552. Positions threonine 595–glutamate 620 are enriched in basic and acidic residues. Low complexity predominate over residues proline 709–proline 723. The span at threonine 765–aspartate 781 shows a compositional bias: basic and acidic residues. The span at alanine 802–glutamate 814 shows a compositional bias: polar residues. Residues aspartate 839 to serine 885 are compositionally biased toward basic and acidic residues. Polar residues predominate over residues lysine 904–glutamate 916. Low complexity predominate over residues serine 951–lysine 968. A compositionally biased stretch (basic and acidic residues) spans lysine 981 to aspartate 990. Composition is skewed to low complexity over residues phenylalanine 991 to aspartate 1000 and lysine 1010 to threonine 1021. Residues proline 1062–isoleucine 1075 are compositionally biased toward polar residues. A compositionally biased stretch (basic and acidic residues) spans glutamate 1091 to lysine 1107. The segment covering lysine 1108–proline 1123 has biased composition (polar residues). Low complexity predominate over residues serine 1147–serine 1162. Composition is skewed to polar residues over residues glycine 1163–leucine 1174 and lysine 1220–glutamine 1236. Serine 1249 carries the phosphoserine modification. A compositionally biased stretch (low complexity) spans glutamate 1277–serine 1292. Residues alanine 1307 to glutamate 1317 show a composition bias toward polar residues. Basic and acidic residues predominate over residues lysine 1327–proline 1358. Low complexity-rich tracts occupy residues threonine 1419–asparagine 1445 and asparagine 1452–lysine 1466.

This sequence belongs to the FAM21 family. Probable component of the WASH complex.

The sequence is that of WASH complex subunit 2 from Dictyostelium discoideum (Social amoeba).